We begin with the raw amino-acid sequence, 162 residues long: uncharacterized protein (162 aa).

An N-terminal signal peptide occupies residues 1-24; it reads MKRGVATLPVILVILLSVAAGAGA.

This is an uncharacterized protein from Mycobacterium bovis (strain ATCC BAA-935 / AF2122/97).